A 313-amino-acid chain; its full sequence is Ribosomal RNA small subunit methyltransferase H (313 aa).

S-adenosyl-L-methionine contacts are provided by residues 36–38 (GGH), Asp56, Phe80, Asp102, and Gln109.

It belongs to the methyltransferase superfamily. RsmH family.

It localises to the cytoplasm. The enzyme catalyses cytidine(1402) in 16S rRNA + S-adenosyl-L-methionine = N(4)-methylcytidine(1402) in 16S rRNA + S-adenosyl-L-homocysteine + H(+). Specifically methylates the N4 position of cytidine in position 1402 (C1402) of 16S rRNA. This is Ribosomal RNA small subunit methyltransferase H from Haemophilus ducreyi (strain 35000HP / ATCC 700724).